Consider the following 172-residue polypeptide: MDKVLNREESMELMDLLGLERAAWGNLPLMRKAYLKKCKEFHPDKGGDEDKMKRMNTLYKKMEQDVKVAHQPDFGTWNSSEVCADFPLCPDTLYCKEWPICSKKPSVHCPCMLCQLRLRHLNRKFLRKEPLVWIDCYCIDCFTQWFGLDLTEETLQWWVQIIGETPFRDLKL.

The residue at position 1 (Met1) is an N-acetylmethionine; by host. A J domain is found at 12 to 75 (ELMDLLGLER…VKVAHQPDFG (64 aa)). A C4-type; atypical zinc finger spans residues 101 to 114 (CSKKPSVHCPCMLC). The segment at 120–141 (HLNRKFLRKEPLVWIDCYCIDC) adopts an H1C3-type; atypical zinc-finger fold.

In terms of assembly, interacts with host PPP2R1A; the interaction inhibits PP2A activity.

It localises to the host cytoplasm. The protein resides in the host nucleus. Its function is as follows. Promotes efficient viral genome replication by accelerating both G1 and S phase progression of the cell cycle. Inhibits host PP2A by binding to the A subunit, thereby displacing lower affinity regulatory B subunit. Inactivation of PP2A in turn results in the transactivation of cyclin A and cyclin D1 promoters. Late during the infection cycle, ST may induce dephosphorylation of host MTOR, leading to the inhibition of cap-dependent translation. May establish and maintain high levels of viral genomes during persistent infection in cell culture. This is Small t antigen from BK polyomavirus (strain AS) (BKPyV).